The sequence spans 466 residues: Delta-1 crystallin (466 aa).

This sequence belongs to the lyase 1 family. Argininosuccinate lyase subfamily. Homotetramer. As to expression, eye lens.

Functionally, delta crystallin, the principal crystallin in embryonic lens, is found only in birds and reptiles. This is Delta-1 crystallin (ASL1) from Meleagris gallopavo (Wild turkey).